Consider the following 240-residue polypeptide: Probable transcriptional regulatory protein VFMJ11_A0186 (240 aa).

This sequence belongs to the TACO1 family.

The protein localises to the cytoplasm. The protein is Probable transcriptional regulatory protein VFMJ11_A0186 of Aliivibrio fischeri (strain MJ11) (Vibrio fischeri).